A 417-amino-acid chain; its full sequence is NADH-quinone oxidoreductase subunit D (417 aa).

It belongs to the complex I 49 kDa subunit family. In terms of assembly, NDH-1 is composed of 14 different subunits. Subunits NuoB, C, D, E, F, and G constitute the peripheral sector of the complex.

The protein localises to the cell inner membrane. It catalyses the reaction a quinone + NADH + 5 H(+)(in) = a quinol + NAD(+) + 4 H(+)(out). NDH-1 shuttles electrons from NADH, via FMN and iron-sulfur (Fe-S) centers, to quinones in the respiratory chain. The immediate electron acceptor for the enzyme in this species is believed to be ubiquinone. Couples the redox reaction to proton translocation (for every two electrons transferred, four hydrogen ions are translocated across the cytoplasmic membrane), and thus conserves the redox energy in a proton gradient. In Albidiferax ferrireducens (strain ATCC BAA-621 / DSM 15236 / T118) (Rhodoferax ferrireducens), this protein is NADH-quinone oxidoreductase subunit D.